Consider the following 477-residue polypeptide: GTPase Der (477 aa).

2 EngA-type G domains span residues 3–167 (LTIA…GKER) and 206–382 (LRIA…RMWN). GTP-binding positions include 9–16 (GRPNVGKS), 56–60 (DTAGL), 119–122 (NKSE), 212–219 (GRPNTGKS), 259–263 (DTAGL), and 324–327 (NKWD). The region spanning 383–467 (RRISTAKLNR…PIRISLRASD (85 aa)) is the KH-like domain.

This sequence belongs to the TRAFAC class TrmE-Era-EngA-EngB-Septin-like GTPase superfamily. EngA (Der) GTPase family. Associates with the 50S ribosomal subunit.

GTPase that plays an essential role in the late steps of ribosome biogenesis. This chain is GTPase Der, found in Bartonella quintana (strain Toulouse) (Rochalimaea quintana).